The following is a 604-amino-acid chain: Elongation factor 4 (604 aa).

In terms of domain architecture, tr-type G spans 10–191 (KNIRNFSIIA…KIITTIPAPS (182 aa)). Residues 22 to 27 (DHGKST) and 138 to 141 (NKID) contribute to the GTP site.

Belongs to the TRAFAC class translation factor GTPase superfamily. Classic translation factor GTPase family. LepA subfamily.

Its subcellular location is the cell inner membrane. It catalyses the reaction GTP + H2O = GDP + phosphate + H(+). Its function is as follows. Required for accurate and efficient protein synthesis under certain stress conditions. May act as a fidelity factor of the translation reaction, by catalyzing a one-codon backward translocation of tRNAs on improperly translocated ribosomes. Back-translocation proceeds from a post-translocation (POST) complex to a pre-translocation (PRE) complex, thus giving elongation factor G a second chance to translocate the tRNAs correctly. Binds to ribosomes in a GTP-dependent manner. The sequence is that of Elongation factor 4 from Helicobacter pylori (strain J99 / ATCC 700824) (Campylobacter pylori J99).